We begin with the raw amino-acid sequence, 475 residues long: Early growth response protein 1-B (475 aa).

Disordered stretches follow at residues 109-180 (NVSS…TASI) and 264-285 (PSRM…RPYA). The segment covering 111 to 140 (SSSSAPSSSPSSSSSSSSSSSSQSPPLSCS) has biased composition (low complexity). Residues 170 to 179 (QPFQNASTAS) are compositionally biased toward polar residues. 3 consecutive C2H2-type zinc fingers follow at residues 284–308 (YACP…IRIH), 314–336 (FQCR…IRTH), and 342–364 (FACD…TKIH). The tract at residues 355–379 (DERKRHTKIHLRQKDKKADKATPVS) is disordered. Over residues 359 to 369 (RHTKIHLRQKD) the composition is skewed to basic residues.

Belongs to the EGR C2H2-type zinc-finger protein family.

It localises to the nucleus. The protein localises to the cytoplasm. Functionally, transcriptional regulator. Recognizes and binds to the DNA sequence 5'-GCG(T/G)GGGCG-3'(EGR-site) in the promoter region of target genes. Binds double-stranded target DNA, irrespective of the cytosine methylation status. Regulates the transcription of numerous target genes, and thereby plays an important role in regulating the response to growth factors, DNA damage, and ischemia. Plays a role in the regulation of cell survival, proliferation and cell death. Mediates responses to ischemia and hypoxia; regulates the expression of proteins that are involved in inflammatory processes. Plays a role in regulating the expression of circadian clock genes. This Xenopus laevis (African clawed frog) protein is Early growth response protein 1-B (egr1-b).